Consider the following 619-residue polypeptide: Pentatricopeptide repeat-containing protein At1g68980, mitochondrial (619 aa).

Residues 1–100 (MLRKTLTLIS…RAFVSTTYVI (100 aa)) constitute a mitochondrion transit peptide. 10 PPR repeats span residues 186 to 221 (DLVA…GVKP), 222 to 256 (DELS…GFAS), 257 to 292 (RRIL…GEAS), 295 to 329 (SEET…ESMS), 366 to 400 (GIGV…GLQL), 401 to 435 (DVET…RVAD), 436 to 466 (LKRC…VMED), 472 to 506 (KSHD…QYEP), 507 to 541 (NNQT…KAKL), and 542 to 576 (EHAL…KIFV).

This sequence belongs to the PPR family. P subfamily.

The protein resides in the mitochondrion. This chain is Pentatricopeptide repeat-containing protein At1g68980, mitochondrial, found in Arabidopsis thaliana (Mouse-ear cress).